Consider the following 669-residue polypeptide: Very long-chain fatty acid transport protein (669 aa).

The Cytoplasmic segment spans residues 1-5 (MSPIQ). The helical transmembrane segment at 6 to 26 (VVVFALSRIFLLLFRLIKLII) threads the bilayer. Residues 27–148 (TPIQKSLGYL…YVAIDCTNKP (122 aa)) are Extracellular-facing. Residues 149 to 169 (LFVFLWLSLWNIGAIPAFLNY) traverse the membrane as a helical segment. Over 170-270 (NTKGTPLVHS…TGLPKSAIMS (101 aa)) the chain is Cytoplasmic. 256 to 267 (YTSGTTGLPKSA) serves as a coordination point for ATP. Residues 271–339 (WRKSSVGCQV…FWKQVYLTGA (69 aa)) lie within the membrane without spanning it. The Cytoplasmic segment spans residues 340-669 (THIQYVGEVC…EAIDAQTIKL (330 aa)). The FACS motif lies at 501–551 (DAWYRCGDLLKADEYGLWYFLDRMGDTFRWKSENVSTTEVEDQLTASNKEQ). The C-terminal peroxisome targeting signal (PTS1) signature appears at 667-669 (IKL).

This sequence belongs to the ATP-dependent AMP-binding enzyme family. As to quaternary structure, interacts with fatty acyl-CoA synthetases FAA1 and FAA4.

Its subcellular location is the lipid droplet. The protein resides in the cell membrane. It is found in the peroxisome membrane. It localises to the peroxisome. The enzyme catalyses a very long-chain fatty acid + ATP + CoA = a very long-chain fatty acyl-CoA + AMP + diphosphate. It carries out the reaction tetracosanoate + ATP + CoA = tetracosanoyl-CoA + AMP + diphosphate. In terms of biological role, acyl-CoA synthetase required for both the import of long chain fatty acids (LCFAs) (C14-C18) and the activation very long chain fatty acids (VLCFAs) (C20-C26) by esterification of the fatty acids into metabolically active CoA-thioesters for subsequent degradation or incorporation into phospholipids. The transport and fatty acyl-CoA synthetase activities are genetically separable and are thus independent activities. Esterifies VLCFAs in the peroxisome matrix. The VLCFAs are actively transported into peroxisomes by a PXA1-PXA2 heterodimeric transporter in the peroxisomal membrane. The chain is Very long-chain fatty acid transport protein (FAT1) from Saccharomyces cerevisiae (strain ATCC 204508 / S288c) (Baker's yeast).